The primary structure comprises 296 residues: Peptide transport system permease protein SapC (296 aa).

Residues 1–28 (MPYDSVYSEKRPPGTLRTAWRKFYSDAP) are Cytoplasmic-facing. The chain crosses the membrane as a helical span at residues 29 to 49 (AMVGLYGCAGLALLCIFGGWI). The Periplasmic portion of the chain corresponds to 50 to 98 (APYGIDQQFLGYQLLPPSWSRYGEVSFFLGTDDLGRDVLSRLLSGAAPT). A helical membrane pass occupies residues 99–119 (VGGAFIVTLAATLCGLVLGVV). The ABC transmembrane type-1 domain occupies 99 to 284 (VGGAFIVTLA…LSVLLVNLLG (186 aa)). The Cytoplasmic segment spans residues 120–133 (AGATHGLRSAVLNH). A helical transmembrane segment spans residues 134-154 (ILDTLLSIPSLLLAIIVVAFA). Residues 155-196 (GPHLSHAMFAVWLALLPRMVRSVYSMVHDELEKEYVIAARLD) lie on the Periplasmic side of the membrane. Residues 197–217 (GATTLNILWFAILPNITAGLV) traverse the membrane as a helical segment. Residues 218–222 (TEITR) are Cytoplasmic-facing. Residues 223–243 (ALSMAILDIAALGFLDLGAQL) form a helical membrane-spanning segment. Topologically, residues 244-257 (PSPEWGAMLGDALE) are periplasmic. The chain crosses the membrane as a helical span at residues 258–278 (LIYVAPWTVMLPGAAITLSVL). Over 279–296 (LVNLLGDGIRRAIIAGVE) the chain is Cytoplasmic.

It belongs to the binding-protein-dependent transport system permease family. OppBC subfamily.

The protein resides in the cell inner membrane. In terms of biological role, involved in a peptide intake transport system that plays a role in the resistance to antimicrobial peptides. The protein is Peptide transport system permease protein SapC (sapC) of Salmonella typhi.